The primary structure comprises 485 residues: Probable glycine dehydrogenase (decarboxylating) subunit 2 (485 aa).

Lys273 is subject to N6-(pyridoxal phosphate)lysine.

The protein belongs to the GcvP family. C-terminal subunit subfamily. As to quaternary structure, the glycine cleavage system is composed of four proteins: P, T, L and H. In this organism, the P 'protein' is a heterodimer of two subunits. Requires pyridoxal 5'-phosphate as cofactor.

The catalysed reaction is N(6)-[(R)-lipoyl]-L-lysyl-[glycine-cleavage complex H protein] + glycine + H(+) = N(6)-[(R)-S(8)-aminomethyldihydrolipoyl]-L-lysyl-[glycine-cleavage complex H protein] + CO2. The glycine cleavage system catalyzes the degradation of glycine. The P protein binds the alpha-amino group of glycine through its pyridoxal phosphate cofactor; CO(2) is released and the remaining methylamine moiety is then transferred to the lipoamide cofactor of the H protein. The protein is Probable glycine dehydrogenase (decarboxylating) subunit 2 of Oceanobacillus iheyensis (strain DSM 14371 / CIP 107618 / JCM 11309 / KCTC 3954 / HTE831).